A 471-amino-acid polypeptide reads, in one-letter code: Glutamate--tRNA ligase (471 aa).

Residues 9–19 carry the 'HIGH' region motif; that stretch reads PSPTGYLHVGG. Zn(2+) is bound by residues Cys-98, Cys-100, Cys-125, and Asp-127. A 'KMSKS' region motif is present at residues 237–241; that stretch reads KLSKR. Residue Lys-240 participates in ATP binding.

This sequence belongs to the class-I aminoacyl-tRNA synthetase family. Glutamate--tRNA ligase type 1 subfamily. Monomer. Requires Zn(2+) as cofactor.

It localises to the cytoplasm. It carries out the reaction tRNA(Glu) + L-glutamate + ATP = L-glutamyl-tRNA(Glu) + AMP + diphosphate. Catalyzes the attachment of glutamate to tRNA(Glu) in a two-step reaction: glutamate is first activated by ATP to form Glu-AMP and then transferred to the acceptor end of tRNA(Glu). The chain is Glutamate--tRNA ligase from Yersinia enterocolitica serotype O:8 / biotype 1B (strain NCTC 13174 / 8081).